The primary structure comprises 488 residues: Gamma-aminobutyric acid receptor subunit beta-4 (488 aa).

A signal peptide spans 1-25 (MWTFQADRLSGIVSALAALCVACCA). Topologically, residues 26–244 (QSPSTGNISV…SFRIKRNIGY (219 aa)) are extracellular. N-linked (GlcNAc...) asparagine glycans are attached at residues N32, N104, N173, and N195. The cysteines at positions 160 and 174 are disulfide-linked. 3 helical membrane-spanning segments follow: residues 245–266 (FILQTYMPSILITILSWVSFWI), 271–292 (SAARVALGVTTVLTMTTINTHL), and 304–326 (AIDVYLMGCFVFVFLALLEYAFV). The Cytoplasmic segment spans residues 327 to 465 (NYIFFGRGPR…DLTDVSTIDK (139 aa)). The helical transmembrane segment at 466–487 (WSRIIFPITFGFFNLVYWLYYV) threads the bilayer.

Belongs to the ligand-gated ion channel (TC 1.A.9) family. Gamma-aminobutyric acid receptor (TC 1.A.9.5) subfamily. GABRB4 sub-subfamily. As to quaternary structure, generally pentameric. There are five types of GABA(A) receptor chains: alpha, beta, gamma, delta, and rho.

Its subcellular location is the postsynaptic cell membrane. The protein resides in the cell membrane. Functionally, GABA, the major inhibitory neurotransmitter in the vertebrate brain, mediates neuronal inhibition by binding to the GABA/benzodiazepine receptor and opening an integral chloride channel. This Gallus gallus (Chicken) protein is Gamma-aminobutyric acid receptor subunit beta-4 (GABRB4).